The primary structure comprises 1776 residues: Signal-induced proliferation-associated 1-like protein 3 (1776 aa).

Disordered stretches follow at residues 41 to 157 (AQNG…GRAF) and 240 to 325 (PGAL…EASR). The span at 54–69 (PAATTTRPSPTTPAMP) shows a compositional bias: low complexity. Composition is skewed to polar residues over residues 89–99 (EQSNPSPSQDT) and 112–129 (RNLQ…SSGS). At S94 the chain carries Phosphoserine. Basic residues predominate over residues 131–140 (AFHRLSRRRS). S140 bears the Phosphoserine mark. Residues 257–268 (GQPTKDSLQSLQ) are compositionally biased toward polar residues. A Phosphoserine modification is found at S394. Residues 438-461 (SRASVGSPGGSSEAHMAEPTLSTH) are disordered. The 218-residue stretch at 605–822 (LLKLDEQGLC…RTRQEYLKDL (218 aa)) folds into the Rap-GAP domain. The PDZ domain occupies 960-1024 (DMTLRRNGLG…DQMIDLLRTS (65 aa)). Disordered regions lie at residues 1040–1104 (PRRG…AQSL), 1117–1164 (RESQ…ATYA), and 1184–1632 (DPHF…LDPG). Polar residues-rich tracts occupy residues 1074-1104 (APWQ…AQSL) and 1151-1160 (PSGSFSTPGS). Over residues 1190–1201 (DGMSSGDSSSGG) the composition is skewed to low complexity. Over residues 1239 to 1255 (SRQDAAGKDSPNRHSKG) the composition is skewed to basic and acidic residues. The segment covering 1260 to 1275 (SSHSSSNTLSSNASSS) has biased composition (low complexity). A compositionally biased stretch (polar residues) spans 1298 to 1316 (GGSSDSGIDTTLYTSSPSC). Positions 1344 to 1357 (SAGRPHPVDRRREV) are enriched in basic and acidic residues. S1358 is modified (phosphoserine). A Phosphothreonine modification is found at T1381. A compositionally biased stretch (polar residues) spans 1409–1436 (VYKTASAETPRPSQLSQCSPFQLSTSVP). N6-acetyllysine is present on K1442. The span at 1503–1512 (TIEDDLKKLI) shows a compositional bias: basic and acidic residues. Composition is skewed to polar residues over residues 1526–1541 (GQSP…SDES) and 1566–1578 (LFTS…SSTL). Residues S1538 and S1541 each carry the phosphoserine modification. Low complexity predominate over residues 1589 to 1601 (PPSGAPSTTPATG). Phosphoserine is present on residues S1614 and S1617. Residues 1620 to 1630 (DGRDRPLRRLD) show a composition bias toward basic and acidic residues. S1672 carries the phosphoserine modification. Residues 1678–1705 (AHSPVHSHLSLERGPQTPRATPTMSEES) form a disordered region. T1694 and T1698 each carry phosphothreonine. Residues 1715-1769 (QLEVMLKQLHTDLQKEKQDKVVLQSEVASLRQNNQRLQEESQAASEQLRKFAELF) adopt a coiled-coil conformation.

It localises to the apical cell membrane. In terms of biological role, plays a critical role in epithelial cell morphogenesis, polarity, adhesion and cytoskeletal organization in the lens. The polypeptide is Signal-induced proliferation-associated 1-like protein 3 (Sipa1l3) (Mus musculus (Mouse)).